Here is a 474-residue protein sequence, read N- to C-terminus: Viral protein TPX (474 aa).

The segment at 268–474 is disordered; that stretch reads VTVTPISSPS…TPTSTTSSNI (207 aa). Residues 275 to 365 are compositionally biased toward pro residues; that stretch reads SPSPTPTPTP…PTPTPTPTPT (91 aa). The Thr-Pro(N) repeat unit spans residues 278 to 367; the sequence is PTPTPTPTPT…PTPTPTPTPT (90 aa). The segment at 278 to 467 is 3 Thr-Pro repeats regions and two near identical repeats; sequence PTPTPTPTPT…PTPTPTPTPT (190 aa). Residues 368–377 constitute a repeat; sequence YDITYVVFDV. Residues 378–436 form a Thr-Pro(N) repeat; that stretch reads TPSPTPTPTPTPTPTPTPTPTPTPTPTPTPTPTPTPTPTPTPTPTPTPTPTPTPTPTPT. Positions 380–434 are enriched in pro residues; that stretch reads SPTPTPTPTPTPTPTPTPTPTPTPTPTPTPTPTPTPTPTPTPTPTPTPTPTPTPT. The segment at residues 437–446 is a repeat; it reads YDITYVIFDV. The Thr-Pro(N) repeat unit spans residues 447–467; sequence TPSPTPTPTPTPTPTPTPTPT. The segment covering 449–465 has biased composition (pro residues); it reads SPTPTPTPTPTPTPTPT.

The chain is Viral protein TPX from Thermoproteus tenax virus 1 (strain VT3) (TTV1).